The chain runs to 89 residues: Small ribosomal subunit protein uS15 (89 aa).

Belongs to the universal ribosomal protein uS15 family. Part of the 30S ribosomal subunit. Forms a bridge to the 50S subunit in the 70S ribosome, contacting the 23S rRNA.

Functionally, one of the primary rRNA binding proteins, it binds directly to 16S rRNA where it helps nucleate assembly of the platform of the 30S subunit by binding and bridging several RNA helices of the 16S rRNA. Forms an intersubunit bridge (bridge B4) with the 23S rRNA of the 50S subunit in the ribosome. This is Small ribosomal subunit protein uS15 from Anoxybacillus flavithermus (strain DSM 21510 / WK1).